Consider the following 533-residue polypeptide: uncharacterized protein (533 aa).

Residues Met1 to Ser26 are disordered. Phosphoserine occurs at positions 20 and 23. Residue Tyr25 is modified to Phosphotyrosine. The residue at position 26 (Ser26) is a Phosphoserine. Helical transmembrane passes span Ile178–Ile198, Tyr213–Leu230, Pro242–His264, Ala274–Ser296, Leu313–Ala333, Ser353–Ser373, Arg394–Phe414, Ile435–Leu455, Gly466–Val486, and Ile495–Phe515.

It belongs to the multi antimicrobial extrusion (MATE) (TC 2.A.66.1) family.

The protein resides in the vacuole membrane. This is an uncharacterized protein from Schizosaccharomyces pombe (strain 972 / ATCC 24843) (Fission yeast).